A 342-amino-acid chain; its full sequence is Protein-ribulosamine 3-kinase, chloroplastic (342 aa).

Residues 1–46 (MANVALLSAASPSTSSAAPRLRHVARRRPSRRSACPRSAASRLSIM) constitute a chloroplast transit peptide. 141–143 (EFI) contributes to the ATP binding site. Asp-246 acts as the Proton acceptor in catalysis.

Belongs to the fructosamine kinase family.

It localises to the plastid. The protein resides in the chloroplast. The enzyme catalyses N(6)-D-ribulosyl-L-lysyl-[protein] + ATP = N(6)-(3-O-phospho-D-ribulosyl)-L-lysyl-[protein] + ADP + H(+). It carries out the reaction N(6)-(D-erythrulosyl)-L-lysyl-[protein] + ATP = N(6)-(3-O-phospho-D-erythrulosyl)-L-lysyl-[protein] + ADP + H(+). In terms of biological role, initiates a process leading to the deglycation of proteins. Phosphorylates low-molecular-mass and protein-bound erythrulosamines and ribulosamines, but not fructosamines or psicosamines, on the third carbon of the sugar moiety. Protein-bound erythrulosamine 3-phosphates and ribulosamine 3-phosphates are unstable and decompose under physiological conditions. In Oryza sativa subsp. indica (Rice), this protein is Protein-ribulosamine 3-kinase, chloroplastic.